The chain runs to 388 residues: Succinate--CoA ligase [ADP-forming] subunit beta (388 aa).

Residues lysine 9 to lysine 245 enclose the ATP-grasp domain. ATP contacts are provided by residues lysine 46, glycine 53–glycine 55, glutamate 100, tyrosine 103, and glutamate 108. Positions 200 and 214 each coordinate Mg(2+). Residues asparagine 265 and glycine 322–valine 324 contribute to the substrate site.

Belongs to the succinate/malate CoA ligase beta subunit family. As to quaternary structure, heterotetramer of two alpha and two beta subunits. Mg(2+) is required as a cofactor.

It carries out the reaction succinate + ATP + CoA = succinyl-CoA + ADP + phosphate. The enzyme catalyses GTP + succinate + CoA = succinyl-CoA + GDP + phosphate. Its pathway is carbohydrate metabolism; tricarboxylic acid cycle; succinate from succinyl-CoA (ligase route): step 1/1. In terms of biological role, succinyl-CoA synthetase functions in the citric acid cycle (TCA), coupling the hydrolysis of succinyl-CoA to the synthesis of either ATP or GTP and thus represents the only step of substrate-level phosphorylation in the TCA. The beta subunit provides nucleotide specificity of the enzyme and binds the substrate succinate, while the binding sites for coenzyme A and phosphate are found in the alpha subunit. The sequence is that of Succinate--CoA ligase [ADP-forming] subunit beta from Neisseria meningitidis serogroup C / serotype 2a (strain ATCC 700532 / DSM 15464 / FAM18).